The sequence spans 616 residues: Homeodomain-interacting protein kinase 4 (616 aa).

The Protein kinase domain maps to 11–347 (YDIIEVLGKG…PSAALRHPFV (337 aa)). Residues 17–25 (LGKGTFGEV) and K40 contribute to the ATP site. D136 acts as the Proton acceptor in catalysis. The segment at 487-616 (HKARKAPAGS…SFLQHVGGHH (130 aa)) is disordered. A compositionally biased stretch (polar residues) spans 497-512 (KSDSNFSNLIRLSQAS). Residue S512 is modified to Phosphoserine. Over residues 542–560 (REGDGPGIKDRPMDAERPG) the composition is skewed to basic and acidic residues.

This sequence belongs to the protein kinase superfamily. CMGC Ser/Thr protein kinase family. HIPK subfamily. Post-translationally, autophosphorylated. As to expression, expressed at moderate levels in lung and white adipose tissues and weakly in brain and liver.

The protein localises to the cytoplasm. The enzyme catalyses L-seryl-[protein] + ATP = O-phospho-L-seryl-[protein] + ADP + H(+). It carries out the reaction L-threonyl-[protein] + ATP = O-phospho-L-threonyl-[protein] + ADP + H(+). Its function is as follows. Protein kinase that phosphorylates murine TP53 at Ser-9, and thus induces TP53 repression of BIRC5 promoter. May act as a corepressor of transcription factors (Potential). This chain is Homeodomain-interacting protein kinase 4 (Hipk4), found in Mus musculus (Mouse).